Consider the following 619-residue polypeptide: Dihydroxy-acid dehydratase (619 aa).

Residue aspartate 81 coordinates Mg(2+). Cysteine 122 provides a ligand contact to [2Fe-2S] cluster. Mg(2+) contacts are provided by aspartate 123 and lysine 124. N6-carboxylysine is present on lysine 124. Cysteine 195 is a binding site for [2Fe-2S] cluster. Glutamate 491 contributes to the Mg(2+) binding site. The active-site Proton acceptor is the serine 517.

It belongs to the IlvD/Edd family. In terms of assembly, homodimer. Requires [2Fe-2S] cluster as cofactor. Mg(2+) serves as cofactor.

The catalysed reaction is (2R)-2,3-dihydroxy-3-methylbutanoate = 3-methyl-2-oxobutanoate + H2O. It carries out the reaction (2R,3R)-2,3-dihydroxy-3-methylpentanoate = (S)-3-methyl-2-oxopentanoate + H2O. Its pathway is amino-acid biosynthesis; L-isoleucine biosynthesis; L-isoleucine from 2-oxobutanoate: step 3/4. The protein operates within amino-acid biosynthesis; L-valine biosynthesis; L-valine from pyruvate: step 3/4. Functions in the biosynthesis of branched-chain amino acids. Catalyzes the dehydration of (2R,3R)-2,3-dihydroxy-3-methylpentanoate (2,3-dihydroxy-3-methylvalerate) into 2-oxo-3-methylpentanoate (2-oxo-3-methylvalerate) and of (2R)-2,3-dihydroxy-3-methylbutanoate (2,3-dihydroxyisovalerate) into 2-oxo-3-methylbutanoate (2-oxoisovalerate), the penultimate precursor to L-isoleucine and L-valine, respectively. The polypeptide is Dihydroxy-acid dehydratase (Rhodopseudomonas palustris (strain HaA2)).